A 116-amino-acid chain; its full sequence is Transcription initiation factor IIA subunit 2 (116 aa).

It belongs to the TFIIA subunit 2 family. In terms of assembly, TFIIA is a heterodimer composed of the large TOA1 and the small TOA2 subunits.

Its subcellular location is the nucleus. In terms of biological role, TFIIA is a component of the transcription machinery of RNA polymerase II and plays an important role in transcriptional activation. TFIIA in a complex with tbp mediates transcriptional activity. The polypeptide is Transcription initiation factor IIA subunit 2 (TOA2) (Pyricularia oryzae (strain 70-15 / ATCC MYA-4617 / FGSC 8958) (Rice blast fungus)).